The following is a 607-amino-acid chain: UvrABC system protein C (607 aa).

The GIY-YIG domain maps to 16-94 (GRPGVYRMFD…IKEWRPPYNI (79 aa)). One can recognise a UVR domain in the interval 203–238 (NALTDELSTAMEAAASTLDFEKAAELRDQISLLRRV).

It belongs to the UvrC family. As to quaternary structure, interacts with UvrB in an incision complex.

Its subcellular location is the cytoplasm. The UvrABC repair system catalyzes the recognition and processing of DNA lesions. UvrC both incises the 5' and 3' sides of the lesion. The N-terminal half is responsible for the 3' incision and the C-terminal half is responsible for the 5' incision. The protein is UvrABC system protein C of Pseudomonas fluorescens (strain ATCC BAA-477 / NRRL B-23932 / Pf-5).